The following is a 621-amino-acid chain: TOX high mobility group box family member 4 (621 aa).

Disordered regions lie at residues 153–227 (LGLS…QKPV) and 305–333 (LDPA…ASIE). At T176 the chain carries Phosphothreonine. Phosphoserine is present on residues S178, S181, and S182. Residues 183–193 (LHEDGVEDFRR) show a composition bias toward basic and acidic residues. The segment covering 208 to 218 (KQKAPKKRKKK) has biased composition (basic residues). Residues 213-218 (KKRKKK) carry the Nuclear localization signal motif. The segment at residues 223 to 291 (PQKPVSAYAL…EYLKALAAYK (69 aa)) is a DNA-binding region (HMG box). Pro residues predominate over residues 307 to 319 (PAPPSQTPSPPPM). Position 313 is a phosphothreonine (T313). Position 315 is a phosphoserine (S315). Positions 320–333 (ATVDPASPAPASIE) are enriched in low complexity. R481 bears the Asymmetric dimethylarginine mark. Residues 510–529 (PTVESSPERPMNNSPEAHTV) are disordered. 6 positions are modified to phosphoserine: S533, S550, S552, S560, S562, and S567.

Component of the PNUTS-PP1 phosphatase complex, composed of PPP1R10/PNUTS, TOX4, WDR82 and PPP1CA or PPP1CB or PPP1CC. Interacts with PPP1R10/PNUTS. Interacts with FOXO1 and CREB1 (increased by cAMP); FOXO1 and CREB1 are required for full induction of TOX4-dependent activity and the interactions are inhibited by insulin.

The protein resides in the nucleus. It localises to the chromosome. With respect to regulation, in liver, recruited to target gene promoters following treatment with dexamethasone and cAMP. Binding is decreased in presence of insulin. In terms of biological role, transcription factor that modulates cell fate reprogramming from the somatic state to the pluripotent and neuronal fate. In liver, controls the expression of hormone-regulated gluconeogenic genes such as G6PC1 and PCK1. This regulation is independent of the insulin receptor activation. Also acts as a regulatory component of protein phosphatase 1 (PP1) complexes. Component of the PNUTS-PP1 protein phosphatase complex, a PP1 complex that regulates RNA polymerase II transcription pause-release. PNUTS-PP1 also plays a role in the control of chromatin structure and cell cycle progression during the transition from mitosis into interphase. The sequence is that of TOX high mobility group box family member 4 (TOX4) from Pongo abelii (Sumatran orangutan).